Consider the following 445-residue polypeptide: Tubulin alpha-1 chain (445 aa).

Gln11 serves as a coordination point for GTP. At Lys40 the chain carries N6-acetyllysine. GTP contacts are provided by Glu71, Ser140, Gly144, Thr145, Thr179, Asn206, and Asn228. Glu71 is a binding site for Mg(2+). The active site involves Glu254.

It belongs to the tubulin family. As to quaternary structure, dimer of alpha and beta chains. A typical microtubule is a hollow water-filled tube with an outer diameter of 25 nm and an inner diameter of 15 nM. Alpha-beta heterodimers associate head-to-tail to form protofilaments running lengthwise along the microtubule wall with the beta-tubulin subunit facing the microtubule plus end conferring a structural polarity. Microtubules usually have 13 protofilaments but different protofilament numbers can be found in some organisms and specialized cells. Mg(2+) is required as a cofactor. Acetylation of alpha chains at Lys-40 stabilizes microtubules and affects affinity and processivity of microtubule motors. This modification has a role in multiple cellular functions, ranging from cell motility, cell cycle progression or cell differentiation to intracellular trafficking and signaling.

The protein localises to the cytoplasm. Its subcellular location is the cytoskeleton. The catalysed reaction is GTP + H2O = GDP + phosphate + H(+). Its function is as follows. Tubulin is the major constituent of microtubules, a cylinder consisting of laterally associated linear protofilaments composed of alpha- and beta-tubulin heterodimers. Microtubules grow by the addition of GTP-tubulin dimers to the microtubule end, where a stabilizing cap forms. Below the cap, tubulin dimers are in GDP-bound state, owing to GTPase activity of alpha-tubulin. The chain is Tubulin alpha-1 chain from Stylonychia lemnae (Ciliate).